Here is a 768-residue protein sequence, read N- to C-terminus: Transferrin receptor protein 1 (768 aa).

At 1–68 (MMDQARSAFS…VAKPKRLNGY (68 aa)) the chain is on the cytoplasmic side. A mediates interaction with SH3BP4 region spans residues 1–70 (MMDQARSAFS…KPKRLNGYVC (70 aa)). Residues serine 10 and serine 19 each carry the phosphoserine modification. A Phosphotyrosine modification is found at tyrosine 20. Residues 20–23 (YTRF) carry the Endocytosis signal motif. A Phosphothreonine modification is found at threonine 21. Residue serine 24 is modified to Phosphoserine. The Stop-transfer sequence signature appears at 61–64 (KPKR). A helical transmembrane segment spans residues 69 to 89 (VCYGIIAVITFFLIGFMIGYL). Residue cysteine 70 is the site of S-palmitoyl cysteine attachment. Residues 90-768 (AYCKRVESKT…GDIWDIDNEF (679 aa)) lie on the Extracellular side of the membrane. Residues 231 to 321 (SKATTVTGKL…GTGDPYTPGF (91 aa)) form the PA domain. N-linked (GlcNAc...) asparagine glycosylation is found at asparagine 259 and asparagine 325. The tract at residues 577–768 (TMDTYDVLSK…GDIWDIDNEF (192 aa)) is ligand-binding. The Cell attachment site signature appears at 654–656 (RGD). N-linked (GlcNAc...) asparagine glycosylation is found at asparagine 730 and asparagine 735.

This sequence belongs to the peptidase M28 family. M28B subfamily. In terms of assembly, homodimer; disulfide-linked. Binds one transferrin or HFE molecule per subunit. Interacts with SH3BP4. Interacts with SH3BP3. Interacts with STEAP3; facilitates TFRC endocytosis in erythroid precursor cells. In terms of processing, stearoylated by ZDHHC6 which inhibits TFRC-mediated activation of the JNK pathway and promotes mitochondrial fragmentation. Stearoylation does not affect iron uptake.

The protein resides in the cell membrane. It is found in the melanosome. Cellular uptake of iron occurs via receptor-mediated endocytosis of ligand-occupied transferrin receptor into specialized endosomes. Endosomal acidification leads to iron release. The apotransferrin-receptor complex is then recycled to the cell surface with a return to neutral pH and the concomitant loss of affinity of apotransferrin for its receptor. Transferrin receptor is necessary for development of erythrocytes and the nervous system. Positively regulates T and B cell proliferation through iron uptake. Acts as a lipid sensor that regulates mitochondrial fusion by regulating activation of the JNK pathway. When dietary levels of stearate (C18:0) are low, promotes activation of the JNK pathway, resulting in HUWE1-mediated ubiquitination and subsequent degradation of the mitofusin MFN2 and inhibition of mitochondrial fusion. When dietary levels of stearate (C18:0) are high, TFRC stearoylation inhibits activation of the JNK pathway and thus degradation of the mitofusin MFN2. Mediates uptake of NICOL1 into fibroblasts where it may regulate extracellular matrix production. This is Transferrin receptor protein 1 (TFRC) from Sus scrofa (Pig).